The following is a 330-amino-acid chain: DNA-directed RNA polymerase subunit alpha (330 aa).

The tract at residues 1–229 (MKNIKFIKPF…DHFNVLVELS (229 aa)) is alpha N-terminal domain (alpha-NTD). Residues 245-330 (AHNSVLDLEI…HSVEEDKDKH (86 aa)) form an alpha C-terminal domain (alpha-CTD) region.

The protein belongs to the RNA polymerase alpha chain family. Homodimer. The RNAP catalytic core consists of 2 alpha, 1 beta, 1 beta' and 1 omega subunit. When a sigma factor is associated with the core the holoenzyme is formed, which can initiate transcription.

The catalysed reaction is RNA(n) + a ribonucleoside 5'-triphosphate = RNA(n+1) + diphosphate. Functionally, DNA-dependent RNA polymerase catalyzes the transcription of DNA into RNA using the four ribonucleoside triphosphates as substrates. The polypeptide is DNA-directed RNA polymerase subunit alpha (Onion yellows phytoplasma (strain OY-M)).